Reading from the N-terminus, the 971-residue chain is Putative helicase 184R (971 aa).

The segment at 506–528 is disordered; it reads GYEPSDSGFGFDDDDSASTSGGK. Residues 624 to 807 form the SF3 helicase domain; sequence PKVIKMLNFF…FKDSIDDISL (184 aa). 668 to 675 is a binding site for ATP; that stretch reads GEGDNGKS.

Belongs to the IIV-6 184R family.

This chain is Putative helicase 184R, found in Acheta domesticus (House cricket).